Reading from the N-terminus, the 439-residue chain is Tol-Pal system protein TolB (439 aa).

An N-terminal signal peptide occupies residues 1-22; that stretch reads MKKPLRWLAALTALLLPLSALA.

The protein belongs to the TolB family. The Tol-Pal system is composed of five core proteins: the inner membrane proteins TolA, TolQ and TolR, the periplasmic protein TolB and the outer membrane protein Pal. They form a network linking the inner and outer membranes and the peptidoglycan layer.

It is found in the periplasm. Its function is as follows. Part of the Tol-Pal system, which plays a role in outer membrane invagination during cell division and is important for maintaining outer membrane integrity. This Xanthomonas axonopodis pv. citri (strain 306) protein is Tol-Pal system protein TolB.